A 632-amino-acid polypeptide reads, in one-letter code: tRNA uridine 5-carboxymethylaminomethyl modification enzyme MnmG (632 aa).

FAD-binding positions include 15-20 (GAGHAG), I127, and S182. 276–290 (GPRYCPSIEDKIVRF) contributes to the NAD(+) binding site. Q373 contacts FAD.

Belongs to the MnmG family. Homodimer. Heterotetramer of two MnmE and two MnmG subunits. The cofactor is FAD.

The protein localises to the cytoplasm. NAD-binding protein involved in the addition of a carboxymethylaminomethyl (cmnm) group at the wobble position (U34) of certain tRNAs, forming tRNA-cmnm(5)s(2)U34. This is tRNA uridine 5-carboxymethylaminomethyl modification enzyme MnmG from Streptococcus pyogenes serotype M12 (strain MGAS2096).